The chain runs to 146 residues: Cytidine deaminase (146 aa).

Residues 13-140 (ECVQQLLVCS…ELLPSSFGPE (128 aa)) form the CMP/dCMP-type deaminase domain. Residue 54 to 60 (NIENACY) coordinates substrate. Residue Cys-65 coordinates Zn(2+). Residue Glu-67 is the Proton donor of the active site. Positions 99 and 102 each coordinate Zn(2+).

The protein belongs to the cytidine and deoxycytidylate deaminase family. Homotetramer. Zn(2+) serves as cofactor. In terms of tissue distribution, highly expressed in granulocytes while expression is very low in fibroblasts, chondrocytes, monocytes, and T- as well as B-cell lines.

The enzyme catalyses cytidine + H2O + H(+) = uridine + NH4(+). It carries out the reaction 2'-deoxycytidine + H2O + H(+) = 2'-deoxyuridine + NH4(+). This enzyme scavenges exogenous and endogenous cytidine and 2'-deoxycytidine for UMP synthesis. The polypeptide is Cytidine deaminase (Homo sapiens (Human)).